The primary structure comprises 438 residues: Aspartate--tRNA(Asp) ligase (438 aa).

Glu-170 contacts L-aspartate. The segment at Gln-192–Lys-195 is aspartate. L-aspartate is bound at residue Arg-214. ATP-binding positions include Arg-214–Glu-216, Arg-222–Leu-224, and Glu-361. Residues Glu-361 and Ser-364 each coordinate Mg(2+). Residues Ser-364 and Arg-368 each coordinate L-aspartate. Residue Gly-409 to Arg-412 participates in ATP binding.

It belongs to the class-II aminoacyl-tRNA synthetase family. Type 2 subfamily. In terms of assembly, homodimer. Requires Mg(2+) as cofactor.

The protein resides in the cytoplasm. The enzyme catalyses tRNA(Asp) + L-aspartate + ATP = L-aspartyl-tRNA(Asp) + AMP + diphosphate. Its function is as follows. Catalyzes the attachment of L-aspartate to tRNA(Asp) in a two-step reaction: L-aspartate is first activated by ATP to form Asp-AMP and then transferred to the acceptor end of tRNA(Asp). The chain is Aspartate--tRNA(Asp) ligase from Pyrococcus abyssi (strain GE5 / Orsay).